The primary structure comprises 130 residues: Small ribosomal subunit protein uS11 (130 aa).

It belongs to the universal ribosomal protein uS11 family. Part of the 30S ribosomal subunit. Interacts with proteins S7 and S18. Binds to IF-3.

Located on the platform of the 30S subunit, it bridges several disparate RNA helices of the 16S rRNA. Forms part of the Shine-Dalgarno cleft in the 70S ribosome. The chain is Small ribosomal subunit protein uS11 from Nautilia profundicola (strain ATCC BAA-1463 / DSM 18972 / AmH).